Consider the following 109-residue polypeptide: Cell division protein ZapA (109 aa).

Residues 21-97 (PEQQEALNQA…QTIEQALVEQ (77 aa)) are a coiled coil.

This sequence belongs to the ZapA family. Type 1 subfamily. In terms of assembly, homodimer. Interacts with FtsZ.

It localises to the cytoplasm. Functionally, activator of cell division through the inhibition of FtsZ GTPase activity, therefore promoting FtsZ assembly into bundles of protofilaments necessary for the formation of the division Z ring. It is recruited early at mid-cell but it is not essential for cell division. This chain is Cell division protein ZapA, found in Sodalis glossinidius (strain morsitans).